The sequence spans 375 residues: 5-amino-6-(D-ribitylamino)uracil--L-tyrosine 4-hydroxyphenyl transferase 1 (375 aa).

Residues 50 to 284 (VTYVVNRNIN…AVSRILFHGH (235 aa)) enclose the Radical SAM core domain. [4Fe-4S] cluster is bound by residues C64, C68, and C71.

Belongs to the radical SAM superfamily. CofH family. In terms of assembly, consists of two subunits, CofG and CofH. Requires [4Fe-4S] cluster as cofactor.

It carries out the reaction 5-amino-6-(D-ribitylamino)uracil + L-tyrosine + S-adenosyl-L-methionine = 5-amino-5-(4-hydroxybenzyl)-6-(D-ribitylimino)-5,6-dihydrouracil + 2-iminoacetate + 5'-deoxyadenosine + L-methionine + H(+). It participates in cofactor biosynthesis; coenzyme F0 biosynthesis. Its function is as follows. Catalyzes the radical-mediated synthesis of 5-amino-5-(4-hydroxybenzyl)-6-(D-ribitylimino)-5,6-dihydrouracil from 5-amino-6-(D-ribitylamino)uracil and L-tyrosine. The chain is 5-amino-6-(D-ribitylamino)uracil--L-tyrosine 4-hydroxyphenyl transferase 1 from Methanosarcina acetivorans (strain ATCC 35395 / DSM 2834 / JCM 12185 / C2A).